Here is a 416-residue protein sequence, read N- to C-terminus: Glutamyl-tRNA reductase (416 aa).

Substrate-binding positions include 49-52, serine 105, 110-112, and glutamine 116; these read TCNR and EPQ. Residue cysteine 50 is the Nucleophile of the active site. Residue 185–190 coordinates NADP(+); sequence GAGETI.

It belongs to the glutamyl-tRNA reductase family. In terms of assembly, homodimer.

The enzyme catalyses (S)-4-amino-5-oxopentanoate + tRNA(Glu) + NADP(+) = L-glutamyl-tRNA(Glu) + NADPH + H(+). It participates in porphyrin-containing compound metabolism; protoporphyrin-IX biosynthesis; 5-aminolevulinate from L-glutamyl-tRNA(Glu): step 1/2. Its function is as follows. Catalyzes the NADPH-dependent reduction of glutamyl-tRNA(Glu) to glutamate 1-semialdehyde (GSA). This chain is Glutamyl-tRNA reductase, found in Shewanella sp. (strain MR-7).